The chain runs to 125 residues: MKKSAPLFLGIIFLTLTGVQGVPAIRNGRCSCINTSQGMIHPKSLKDLKQFAPSPSCEKTEIIATMKNGNEACLNPDLPEVKELIKEWEKQVNQKKKQRKGKKYKKTKKVPKVKRSQRPSQKKTT.

Residues 1 to 21 form the signal peptide; sequence MKKSAPLFLGIIFLTLTGVQG. 2 cysteine pairs are disulfide-bonded: Cys30–Cys57 and Cys32–Cys73. The tract at residues 91-125 is disordered; that stretch reads QVNQKKKQRKGKKYKKTKKVPKVKRSQRPSQKKTT. Positions 93–125 are enriched in basic residues; that stretch reads NQKKKQRKGKKYKKTKKVPKVKRSQRPSQKKTT.

It belongs to the intercrine alpha (chemokine CxC) family.

It is found in the secreted. Its function is as follows. Cytokine that affects the growth, movement, or activation state of cells that participate in immune and inflammatory response. Chemotactic for activated T-cells. Binds to CXCR3. In Bos taurus (Bovine), this protein is C-X-C motif chemokine 9 (CXCL9).